Reading from the N-terminus, the 274-residue chain is tRNA pseudouridine synthase A (274 aa).

The active-site Nucleophile is Asp51. Tyr109 contributes to the substrate binding site.

The protein belongs to the tRNA pseudouridine synthase TruA family. Homodimer.

It carries out the reaction uridine(38/39/40) in tRNA = pseudouridine(38/39/40) in tRNA. Functionally, formation of pseudouridine at positions 38, 39 and 40 in the anticodon stem and loop of transfer RNAs. The polypeptide is tRNA pseudouridine synthase A (Acidovorax sp. (strain JS42)).